The chain runs to 593 residues: Glutamate decarboxylase 1 (593 aa).

Residues 1–12 (MASSTPSPATSS) are compositionally biased toward low complexity. The interval 1–22 (MASSTPSPATSSNAGADPNTTN) is disordered. Phosphoserine is present on Ser-77. A 4-aminobutanoate-binding site is contributed by 189–191 (QLS). N6-(pyridoxal phosphate)lysine is present on Lys-404. Arg-566 contributes to the 4-aminobutanoate binding site.

This sequence belongs to the group II decarboxylase family. In terms of assembly, homodimer. Requires pyridoxal 5'-phosphate as cofactor. As to expression, expressed in brain and pancreatic islets.

It carries out the reaction L-glutamate + H(+) = 4-aminobutanoate + CO2. Functionally, catalyzes the synthesis of the inhibitory neurotransmitter gamma-aminobutyric acid (GABA) with pyridoxal 5'-phosphate as cofactor. The chain is Glutamate decarboxylase 1 (Gad1) from Rattus norvegicus (Rat).